Consider the following 307-residue polypeptide: Myeloid-associated differentiation marker-like protein 2 (307 aa).

MARVEL domains follow at residues alanine 17–glycine 154 and tyrosine 159–phenylalanine 303. Transmembrane regions (helical) follow at residues phenylalanine 53–phenylalanine 73, alanine 90–phenylalanine 110, leucine 129–threonine 149, valine 163–valine 183, valine 198–glycine 218, valine 232–phenylalanine 252, and leucine 278–serine 298.

It belongs to the MAL family.

The protein resides in the membrane. In Rattus norvegicus (Rat), this protein is Myeloid-associated differentiation marker-like protein 2 (Myadml2).